The chain runs to 74 residues: Protein translocase subunit SecE (74 aa).

Residues 1–36 are Cytoplasmic-facing; that stretch reads MKTDFNQKIEQLKEFIEECRRVWLVLKKPTKDEYLA. A helical membrane pass occupies residues 37 to 62; that stretch reads VAKVTALGISLLGIIGYIIHVPATYI. The Extracellular portion of the chain corresponds to 63–74; the sequence is KGILKPPTTPRV.

This sequence belongs to the SecE/SEC61-gamma family. As to quaternary structure, component of the Sec protein translocase complex. Heterotrimer consisting of alpha (SecY), beta (SecG) and gamma (SecE) subunits. The heterotrimers can form oligomers, although 1 heterotrimer is thought to be able to translocate proteins. Interacts with the ribosome. May interact with SecDF, and other proteins may be involved.

Its subcellular location is the cell membrane. Its function is as follows. Essential subunit of the protein translocation channel SecYEG. Clamps together the 2 halves of SecY. May contact the channel plug during translocation. The sequence is that of Protein translocase subunit SecE from Methanocaldococcus jannaschii (strain ATCC 43067 / DSM 2661 / JAL-1 / JCM 10045 / NBRC 100440) (Methanococcus jannaschii).